Consider the following 517-residue polypeptide: Glutamate--tRNA ligase (517 aa).

The 'HIGH' region motif lies at 14–24 (PSPTGPLHIGG). Residues 266-270 (KLSKR) carry the 'KMSKS' region motif. K269 lines the ATP pocket.

The protein belongs to the class-I aminoacyl-tRNA synthetase family. Glutamate--tRNA ligase type 1 subfamily. In terms of assembly, monomer.

It localises to the cytoplasm. It carries out the reaction tRNA(Glu) + L-glutamate + ATP = L-glutamyl-tRNA(Glu) + AMP + diphosphate. In terms of biological role, catalyzes the attachment of glutamate to tRNA(Glu) in a two-step reaction: glutamate is first activated by ATP to form Glu-AMP and then transferred to the acceptor end of tRNA(Glu). The sequence is that of Glutamate--tRNA ligase from Cytophaga hutchinsonii (strain ATCC 33406 / DSM 1761 / CIP 103989 / NBRC 15051 / NCIMB 9469 / D465).